The primary structure comprises 321 residues: Phospho-N-acetylmuramoyl-pentapeptide-transferase (321 aa).

Helical transmembrane passes span Met1 to Ile21, Met50 to Val70, Ile76 to Ile96, Phe112 to Val132, Ile140 to Trp160, Gly176 to Leu196, Ala200 to Ile220, Val225 to Met245, Leu250 to Val270, and Val300 to Val320.

This sequence belongs to the glycosyltransferase 4 family. MraY subfamily. It depends on Mg(2+) as a cofactor.

Its subcellular location is the cell membrane. It carries out the reaction UDP-N-acetyl-alpha-D-muramoyl-L-alanyl-gamma-D-glutamyl-L-lysyl-D-alanyl-D-alanine + di-trans,octa-cis-undecaprenyl phosphate = Mur2Ac(oyl-L-Ala-gamma-D-Glu-L-Lys-D-Ala-D-Ala)-di-trans,octa-cis-undecaprenyl diphosphate + UMP. Its pathway is cell wall biogenesis; peptidoglycan biosynthesis. Functionally, catalyzes the initial step of the lipid cycle reactions in the biosynthesis of the cell wall peptidoglycan: transfers peptidoglycan precursor phospho-MurNAc-pentapeptide from UDP-MurNAc-pentapeptide onto the lipid carrier undecaprenyl phosphate, yielding undecaprenyl-pyrophosphoryl-MurNAc-pentapeptide, known as lipid I. The polypeptide is Phospho-N-acetylmuramoyl-pentapeptide-transferase (Staphylococcus aureus (strain MSSA476)).